Here is a 222-residue protein sequence, read N- to C-terminus: UPF0758 protein Cpar_0627 (222 aa).

The MPN domain maps to 100-222 (KIQGAQDVFE…WFSFRDHSLL (123 aa)). Zn(2+)-binding residues include H171, H173, and D184. Positions 171–184 (HNHPSGDVQPSNAD) match the JAMM motif motif.

The protein belongs to the UPF0758 family.

The sequence is that of UPF0758 protein Cpar_0627 from Chlorobaculum parvum (strain DSM 263 / NCIMB 8327) (Chlorobium vibrioforme subsp. thiosulfatophilum).